Here is a 162-residue protein sequence, read N- to C-terminus: MFSVARTAIRGAARPAVRIARRGYAETASVDKLRLTLALPHQSIYNQKEVTQVNIPSTAGELGILANHVPTIQQLKPGVVEVIETNGETKSYFISGGFATVQPDSELSVNSIEAFQAEDFSPEAIKSLTAEAQKNAQSADEAVAAEAEIELEVLEALAHFAK.

Residues 1–24 (MFSVARTAIRGAARPAVRIARRGY) constitute a mitochondrion transit peptide.

In terms of assembly, F-type ATP synthases have 2 components, the catalytic core F(1) and the membrane-embedded component F(0), linked together by a central stalk and a peripheral stalk. The central stalk, also called rotor shaft, is often seen as part of F(1). The peripheral stalk is seen as part of F(0). F(0) contains the membrane channel next to the rotor. F-type ATP synthases form dimers but each monomer functions independently in ATP generation. The dimer consists of 17 different polypeptides: ATP1 (subunit alpha, 3 molecules per monomer, part of F(1)), ATP2 (subunit beta, 3 copies per monomer, part of F(1)), ATP3 (subunit gamma, part of the central stalk), ATP4 (subunit b, part of the peripheral stalk), ATP5/OSCP (subunit 5/OSCP, part of the peripheral stalk), ATP6 (subunit a, part of the peripheral stalk), ATP7 (subunit d, part of the peripheral stalk), ATP8 (subunit 8, part of the peripheral stalk), OLI1 (subunit c, part of the rotor, 10 molecules per monomer), ATP14 (subunit h, part of the peripheral stalk), ATP15 (subunit epsilon, part of the central stalk), ATP16 (subunit delta, part of the central stalk), ATP17 (subunit f, part of the peripheral stalk), ATP18 (subunit i/j, part of the peripheral stalk), ATP19 (subunit k, dimer-specific, at interface between monomers), ATP20 (subunit g, at interface between monomers), TIM11 (subunit e, at interface between monomers).

It is found in the mitochondrion inner membrane. Functionally, mitochondrial membrane ATP synthase (F(1)F(0) ATP synthase or Complex V) produces ATP from ADP in the presence of a proton gradient across the membrane which is generated by electron transport complexes of the respiratory chain. F-type ATP synthases consist of two structural domains, F(1) - containing the extramembraneous catalytic core, and F(0) - containing the membrane proton channel, linked together by a central stalk and a peripheral stalk. During catalysis, ATP synthesis in the catalytic domain of F(1) is coupled via a rotary mechanism of the central stalk subunits to proton translocation. Part of the complex F(1) domain and the central stalk which is part of the complex rotary element. Rotation of the central stalk against the surrounding alpha/ATP1(3)beta/ATP2(3) subunits leads to hydrolysis of ATP in three separate catalytic sites on the beta/ATP2 subunits. The sequence is that of ATP synthase subunit delta, mitochondrial from Yarrowia lipolytica (strain CLIB 122 / E 150) (Yeast).